We begin with the raw amino-acid sequence, 461 residues long: Cysteine--tRNA ligase (461 aa).

Cys30 contacts Zn(2+). The short motif at Val32–His42 is the 'HIGH' region element. Residues Cys211, His236, and Glu240 each contribute to the Zn(2+) site. Residues Lys268–Ser272 carry the 'KMSKS' region motif. An ATP-binding site is contributed by Lys271.

The protein belongs to the class-I aminoacyl-tRNA synthetase family. As to quaternary structure, monomer. Requires Zn(2+) as cofactor.

The protein localises to the cytoplasm. The enzyme catalyses tRNA(Cys) + L-cysteine + ATP = L-cysteinyl-tRNA(Cys) + AMP + diphosphate. The polypeptide is Cysteine--tRNA ligase (Shewanella sp. (strain ANA-3)).